The primary structure comprises 202 residues: Oxopyrrolidines biosynthesis cluster protein O (202 aa).

Its function is as follows. Part of the gene cluster that mediates the biosynthesis of oxopyrrolidines, polyketide-amino acid hybrid compounds with feature structures of tetramic acid. Does not seem to play a role in oxopyrrolidines A and B biosynthesis. The protein is Oxopyrrolidines biosynthesis cluster protein O of Penicillium oxalicum (strain 114-2 / CGMCC 5302) (Penicillium decumbens).